The primary structure comprises 321 residues: MEPLAMTLYPLESTQPTRNKTPNETTWSSEHTDDHTYFLVSLVICSLGLAGNGLLIWFLIFCIKRKPFTIYILHLAIADFMVLLCSSIMKLVNTFHIYNMTLESYAILFMIFGYNTGLHLLTAISVERCLSVLYPIWYQCQRPKHQSAVACMLLWALSVLVSGLENFFCILEVKPQFPECRYVYIFSCILTFLVFVPLMIFSNLILFIQVCCNLKPRQPTKLYVIIMTTVILFLVFAMPMKVLLIIGYYSSSLDDSVWDSLPYLNMLSTINCSINPIVYFVVGSLRRKRSRKSLKEALQKVFEEKPVVASRENVTQFSLPS.

Residues 1-35 lie on the Extracellular side of the membrane; it reads MEPLAMTLYPLESTQPTRNKTPNETTWSSEHTDDH. Asparagine 23 is a glycosylation site (N-linked (GlcNAc...) asparagine). A helical transmembrane segment spans residues 36-56; the sequence is TYFLVSLVICSLGLAGNGLLI. Residues 57-71 are Cytoplasmic-facing; that stretch reads WFLIFCIKRKPFTIY. The helical transmembrane segment at 72–92 threads the bilayer; the sequence is ILHLAIADFMVLLCSSIMKLV. The Extracellular segment spans residues 93 to 102; that stretch reads NTFHIYNMTL. N-linked (GlcNAc...) asparagine glycosylation occurs at asparagine 99. The chain crosses the membrane as a helical span at residues 103-126; sequence ESYAILFMIFGYNTGLHLLTAISV. At 127–147 the chain is on the cytoplasmic side; the sequence is ERCLSVLYPIWYQCQRPKHQS. Residues 148–168 traverse the membrane as a helical segment; sequence AVACMLLWALSVLVSGLENFF. Topologically, residues 169 to 188 are extracellular; it reads CILEVKPQFPECRYVYIFSC. The helical transmembrane segment at 189–209 threads the bilayer; that stretch reads ILTFLVFVPLMIFSNLILFIQ. Residues 210–225 are Cytoplasmic-facing; it reads VCCNLKPRQPTKLYVI. The chain crosses the membrane as a helical span at residues 226-246; it reads IMTTVILFLVFAMPMKVLLII. Position 247 (glycine 247) is a topological domain, extracellular. The chain crosses the membrane as a helical span at residues 248–271; sequence YYSSSLDDSVWDSLPYLNMLSTIN. Residues 272–320 lie on the Cytoplasmic side of the membrane; sequence CSINPIVYFVVGSLRRKRSRKSLKEALQKVFEEKPVVASRENVTQFSLP.

Belongs to the G-protein coupled receptor 1 family. Mas subfamily.

It is found in the cell membrane. In terms of biological role, orphan receptor. May regulate nociceptor function and/or development, including the sensation or modulation of pain. The polypeptide is Mas-related G-protein coupled receptor member H (Mrgprh) (Mus musculus (Mouse)).